We begin with the raw amino-acid sequence, 154 residues long: Egg-lysin (154 aa).

A signal peptide spans 1–18; sequence MKLLVLCIFAMMATLAMS.

In terms of assembly, homodimer. In terms of tissue distribution, sperm.

Functionally, dissolves the egg vitelline layer nonenzymatically during fertilization. It creates a hole of about 3 mu-m in diameter through which the sperm pass. The protein is Egg-lysin of Haliotis walallensis (Flat abalone).